We begin with the raw amino-acid sequence, 208 residues long: Uracil phosphoribosyltransferase (208 aa).

Residues Arg78, Arg103, and 130–138 (DPMLATGGT) contribute to the 5-phospho-alpha-D-ribose 1-diphosphate site. Uracil is bound by residues Ile193 and 198–200 (GDA). Asp199 is a binding site for 5-phospho-alpha-D-ribose 1-diphosphate.

This sequence belongs to the UPRTase family. It depends on Mg(2+) as a cofactor.

It carries out the reaction UMP + diphosphate = 5-phospho-alpha-D-ribose 1-diphosphate + uracil. It functions in the pathway pyrimidine metabolism; UMP biosynthesis via salvage pathway; UMP from uracil: step 1/1. Allosterically activated by GTP. In terms of biological role, catalyzes the conversion of uracil and 5-phospho-alpha-D-ribose 1-diphosphate (PRPP) to UMP and diphosphate. The sequence is that of Uracil phosphoribosyltransferase from Nitratidesulfovibrio vulgaris (strain ATCC 29579 / DSM 644 / CCUG 34227 / NCIMB 8303 / VKM B-1760 / Hildenborough) (Desulfovibrio vulgaris).